A 402-amino-acid polypeptide reads, in one-letter code: La-related protein 7 homolog (402 aa).

The interval 64–138 (EPLNPDFLSA…FDNSSHMVIR (75 aa)) is HTH La-type RNA-binding-like region. The tract at residues 148–230 (IPLYDRIIYV…LTRKEWTNRE (83 aa)) is RRM-like region. The tract at residues 288 to 400 (DFTKNLLTRI…EEEKNYWRML (113 aa)) is xRRM-like region. One can recognise a xRRM domain in the interval 288–402 (DFTKNLLTRI…EKNYWRMLKK (115 aa)).

Belongs to the LARP7 family. In terms of assembly, component of the telomerase holoenzyme complex composed minimally of trt1 and the telomerase RNA template component. Interacts with skp1.

The protein resides in the chromosome. Its subcellular location is the telomere. It is found in the nucleus. It localises to the cytoplasm. In terms of biological role, RNA-binding protein required for assembly of the holoenzyme telomerase ribonucleoprotein (RNP) complex. Specifically binds telomerase RNA ter1 and promotes assembly of ter1 with catalytic subunit trt1. Telomerase is a ribonucleoprotein enzyme essential that copies new telomeric repeats onto chromosome ends and functions to maintain cell division. This Schizosaccharomyces pombe (strain 972 / ATCC 24843) (Fission yeast) protein is La-related protein 7 homolog.